The sequence spans 70 residues: Phycobilisome 8.1 kDa linker polypeptide, phycocyanin-associated, rod (70 aa).

The 59-residue stretch at 5–63 folds into the CpcD-like domain; the sequence is SRSFQVEVSGLHQNEVTNQNNYPIRSSGSVFITIPFSRFNEELQRINRLGGKIVNIQPL.

This sequence belongs to the phycobilisome linker protein family.

Its subcellular location is the cellular thylakoid membrane. Its function is as follows. Rod linker protein, associated with phycocyanin. Linker polypeptides determine the state of aggregation and the location of the disk-shaped phycobiliprotein units within the phycobilisome and modulate their spectroscopic properties in order to mediate a directed and optimal energy transfer. This chain is Phycobilisome 8.1 kDa linker polypeptide, phycocyanin-associated, rod (cpcD3), found in Microchaete diplosiphon (Fremyella diplosiphon).